A 123-amino-acid chain; its full sequence is Large-conductance mechanosensitive channel (123 aa).

2 consecutive transmembrane segments (helical) span residues 14–34 (VLDL…VTSL) and 67–87 (GNFI…FLLV).

This sequence belongs to the MscL family. As to quaternary structure, homopentamer.

It is found in the cell membrane. In terms of biological role, channel that opens in response to stretch forces in the membrane lipid bilayer. May participate in the regulation of osmotic pressure changes within the cell. The sequence is that of Large-conductance mechanosensitive channel from Lacticaseibacillus casei (strain BL23) (Lactobacillus casei).